The following is a 384-amino-acid chain: Formate dehydrogenase, chloroplastic/mitochondrial (384 aa).

The N-terminal 29 residues, 1-29 (MAMRQAAKATIRACSSSSSSGYFARRQFN), are a transit peptide targeting the chloroplast and mitochondrion. The substrate site is built by Ile128 and Asn152. NAD(+)-binding positions include 207–208 (RI), Asp227, 262–266 (PLTEK), Asn288, Asp314, and 338–341 (HTSG).

Belongs to the D-isomer specific 2-hydroxyacid dehydrogenase family. FDH subfamily. As to quaternary structure, homodimer.

The protein resides in the mitochondrion. The protein localises to the plastid. It localises to the chloroplast. It catalyses the reaction formate + NAD(+) = CO2 + NADH. Catalyzes the NAD(+)-dependent oxidation of formate to carbon dioxide. Involved in the cell stress response. The polypeptide is Formate dehydrogenase, chloroplastic/mitochondrial (FDH1) (Arabidopsis thaliana (Mouse-ear cress)).